A 123-amino-acid polypeptide reads, in one-letter code: Protein Wnt-3a (123 aa).

Ser1 carries the O-palmitoleoyl serine lipid modification. Cys89 and Cys104 are joined by a disulfide. Asn90 is a glycosylation site (N-linked (GlcNAc...) asparagine).

Belongs to the Wnt family. Disulfide bonds have critical and distinct roles in secretion and activity. Loss of each conserved cysteine results in high molecular weight oxidized Wnt oligomers, which are formed through inter-Wnt disulfide bonding. In terms of processing, palmitoleoylation is required for efficient binding to frizzled receptors. Depalmitoleoylation leads to Wnt signaling pathway inhibition.

It is found in the secreted. The protein localises to the extracellular space. Its subcellular location is the extracellular matrix. Ligand for members of the frizzled family of seven transmembrane receptors. Functions in the canonical Wnt signaling pathway that results in activation of transcription factors of the TCF/LEF family. Required for normal embryonic mesoderm development and formation of caudal somites. Required for normal morphogenesis of the developing neural tube. This Meleagris gallopavo (Wild turkey) protein is Protein Wnt-3a (WNT3A).